A 322-amino-acid chain; its full sequence is MKQSKLGVLMVNLGTPDAPTPQAVKRYLAEFLSDRRVVDTSPWLWWPLLRGVILPIRSPRVAKLYQSVWMDEGSPLLVYSRRQQKALAERMPEIPVELGMSYGSPNLPDAIDKLLAQGVTKLVVLPLYPQYSCSTSAAVWDAVARILKGYRRLPSISFIRDYAEHPAYISALKQSVENSFVQHGKPDRLVLSFHGIPKRYAQLGDDYPQRCEDTSRALRAEIALPAEQIMMTYQSRFGREPWLTPYTDETLKSLPSQGVKHIQLICPGFSADCLETLEEIKEQNREVFIHAGGEKFEYIPALNDDKGHIDLLEQLVRDHLSC.

His-194 and Glu-275 together coordinate Fe cation.

This sequence belongs to the ferrochelatase family.

The protein resides in the cytoplasm. The catalysed reaction is heme b + 2 H(+) = protoporphyrin IX + Fe(2+). The protein operates within porphyrin-containing compound metabolism; protoheme biosynthesis; protoheme from protoporphyrin-IX: step 1/1. In terms of biological role, catalyzes the ferrous insertion into protoporphyrin IX. The sequence is that of Ferrochelatase from Yersinia enterocolitica.